We begin with the raw amino-acid sequence, 90 residues long: U7-theraphotoxin-Hhn1i (90 aa).

The N-terminal stretch at 1–19 (MKTAIFTVVLALAVFAVLS) is a signal peptide. Positions 20–50 (FGWEANEKALSEEFTELIHEKEAASETEARE) are excised as a propeptide. Cystine bridges form between Cys-51–Cys-65, Cys-58–Cys-70, and Cys-64–Cys-81.

Belongs to the neurotoxin 10 (Hwtx-1) family. 13 (Hntx-13) subfamily. Expressed by the venom gland.

The protein resides in the secreted. In terms of biological role, ion channel inhibitor. The sequence is that of U7-theraphotoxin-Hhn1i from Cyriopagopus hainanus (Chinese bird spider).